A 243-amino-acid polypeptide reads, in one-letter code: Aliphatic sulfonates import ATP-binding protein SsuB (243 aa).

Residues 11–230 (ATVRGLRKSY…RTHPSFASYT (220 aa)) form the ABC transporter domain. 43–50 (GRSGSGKS) contacts ATP.

Belongs to the ABC transporter superfamily. Aliphatic sulfonates importer (TC 3.A.1.17.2) family. The complex is composed of two ATP-binding proteins (SsuB), two transmembrane proteins (SsuC) and a solute-binding protein (SsuA).

Its subcellular location is the cell membrane. The catalysed reaction is ATP + H2O + aliphatic sulfonate-[sulfonate-binding protein]Side 1 = ADP + phosphate + aliphatic sulfonateSide 2 + [sulfonate-binding protein]Side 1.. Its function is as follows. Part of the ABC transporter complex SsuABC involved in aliphatic sulfonates import. Responsible for energy coupling to the transport system. Is also involved in taurine transport. Seems to not be involved in long chain aliphatic sulfonates transport (chain length of eight carbon atoms or more). This Corynebacterium glutamicum (strain ATCC 13032 / DSM 20300 / JCM 1318 / BCRC 11384 / CCUG 27702 / LMG 3730 / NBRC 12168 / NCIMB 10025 / NRRL B-2784 / 534) protein is Aliphatic sulfonates import ATP-binding protein SsuB.